A 994-amino-acid chain; its full sequence is MVVTKLATQRPKLPSVGRLGLVDPPAGERLAQLGWDRHEDQAHVDLLWSLSRAPDADAALRALIRLSENPDTGWDELNAALLRERSLRGRLFSVLGSSLALGDHLVAHPQSWKLLRGKVTLPSHDQLQRSFVECVEESEGMPGSLVHRLRTQYRDYVLMLAALDLAATVEDEPVLPFTVVAARLADAADAALAAALRVAEASVCGEHPPPRLAVIAMGKCGARELNYVSDVDVIFVAERSDPRNARVASEMMRVASAAFFEVDAALRPEGRNGELVRTLESHIAYYQRWAKTWEFQALLKARPVVGDAELGERYLTALMPMVWRACEREDFVVEVQAMRRRVEQLVPADVRGRELKLGSGGLRDVEFAVQLLQLVHARSDESLRVASTVDALAALGEGGYIGREDAANMTASYEFLRLLEHRLQLQRLKRTHLLPDPEDEEAVRWLARAAHIRPDGRNDAAGVLREELKKQNVRVSKLHTKLFYQPLLESIGPTGLEIAHGMTLEAAGRRLAALGYEGPQTALKHMSALVNQSGRRGRVQSVLLPRLLDWMSYAPDPDGGLLAYRRLSEALATESWYLATLRDKPAVAKRLMHVLGTSAYVPDLLMRAPRVIQQYEDGPAGPKLLETEPAAVARALIASASRYPDPERAIAGARTLRRRELARIGSADLLGLLEVTEVCRALTSVWVAVLQAALDVMIRASLPDDDRAPAAIAVIGMGRLGGAELGYGSDADVMFVCEPATGVDDARAVKWSTSIAERVRALLGTPSVDPPLELDANLRPEGRNGPLVRTLGSYAAYYEQWAQPWEIQALLRAHAVAGDAELGQRFLRMVDKTRYPPDGVSADSVREIRRIKARIESERLPRGADPNTHTKLGRGGLADIEWTVQLLQLQHAHQVPALHNTSTLQSLDVIAAADLVPAADVELLRQAWLTATRARNALVLVRGKPTDQLPGPGRQLNAVAVAAGWRNDDGGEFLDNYLRVTRRAKAVVRKVFGS.

The tract at residues 1–487 (MVVTKLATQR…LHTKLFYQPL (487 aa)) is adenylyl removase. Residues 492-994 (GPTGLEIAHG…KAVVRKVFGS (503 aa)) are adenylyl transferase.

Belongs to the GlnE family. The cofactor is Mg(2+).

The catalysed reaction is [glutamine synthetase]-O(4)-(5'-adenylyl)-L-tyrosine + phosphate = [glutamine synthetase]-L-tyrosine + ADP. It catalyses the reaction [glutamine synthetase]-L-tyrosine + ATP = [glutamine synthetase]-O(4)-(5'-adenylyl)-L-tyrosine + diphosphate. Functionally, involved in the regulation of glutamine synthetase GlnA, a key enzyme in the process to assimilate ammonia. When cellular nitrogen levels are high, the C-terminal adenylyl transferase (AT) inactivates GlnA by covalent transfer of an adenylyl group from ATP to specific tyrosine residue of GlnA, thus reducing its activity. Conversely, when nitrogen levels are low, the N-terminal adenylyl removase (AR) activates GlnA by removing the adenylyl group by phosphorolysis, increasing its activity. The regulatory region of GlnE binds the signal transduction protein PII (GlnB) which indicates the nitrogen status of the cell. The polypeptide is Bifunctional glutamine synthetase adenylyltransferase/adenylyl-removing enzyme (Mycobacterium bovis (strain ATCC BAA-935 / AF2122/97)).